Here is a 247-residue protein sequence, read N- to C-terminus: 3-deoxy-manno-octulosonate cytidylyltransferase (247 aa).

This sequence belongs to the KdsB family.

It localises to the cytoplasm. The catalysed reaction is 3-deoxy-alpha-D-manno-oct-2-ulosonate + CTP = CMP-3-deoxy-beta-D-manno-octulosonate + diphosphate. It functions in the pathway nucleotide-sugar biosynthesis; CMP-3-deoxy-D-manno-octulosonate biosynthesis; CMP-3-deoxy-D-manno-octulosonate from 3-deoxy-D-manno-octulosonate and CTP: step 1/1. Its pathway is bacterial outer membrane biogenesis; lipopolysaccharide biosynthesis. Its function is as follows. Activates KDO (a required 8-carbon sugar) for incorporation into bacterial lipopolysaccharide in Gram-negative bacteria. In Chlorobium phaeobacteroides (strain DSM 266 / SMG 266 / 2430), this protein is 3-deoxy-manno-octulosonate cytidylyltransferase.